The following is a 287-amino-acid chain: Short-chain dehydrogenase virD (287 aa).

8 residues coordinate NADP(+): V10, T36, D57, N85, Y149, K153, V182, and T184. Y149 functions as the Proton acceptor in the catalytic mechanism. K153 functions as the Lowers pKa of active site Tyr in the catalytic mechanism.

This sequence belongs to the short-chain dehydrogenases/reductases (SDR) family.

The protein operates within secondary metabolite biosynthesis. In terms of biological role, short-chain dehydrogenase; part of the gene cluster that mediates the biosynthesis of virensols and trichoxide, fungal natural products that contain or are derived from a salicylaldehyde core. The pathway begins with the synthesis of the reduced chain in virensol C by the highly reducing polyketide synthase virA via condensation of one acetate and 8 malonate units. VirA has interesting programming rules since the first 2 ketides are fully reduced, the 3 following ketides undergo beta-dehydration, and the last 3 ketides are only reduced to beta-hydroxys to yield the trihydroxy portion. The production of aldehyde virensol C by virA alone is surprising, since virA does not contain a reductase (R) domain that is typically associated with reductive product release in HRPKS. The cupin-domain enzyme virC is involved in enhancing virA product turnover. The short-chain dehydrogenase virB then oxidizes the C-7 alcohol of virensol C to a ketone, yielding virensol D. Virensol D is further transformed to salicylaldehyde 5-deoxyaurocitrin by the short-chain dehydrogenase virD. VirD catalyzes the dehydrogenation of C-3 to form the beta-ketone aldehyde, which is followed by the generation of the nucleophilic C-2 that is required for the intramolecular aldol condensation between C-2 and C-7, itself followed by dehydration and aromatization which leads to salicylaldehyde 5-deoxyaurocitrin. While the dehydrogenation of virensol D is definitely catalyzed by virD, the aldol condensation and dehydration may be uncatalyzed or assisted by virD. The short chain dehydrogenase virG then converts salicylaldehyde 5-deoxyaurocitrin into virensol B which is further hydroxylated by the cytochrome P450 monooxygenase virE to yield the hydroquinone virensol A. VirI then may oxidize virensol A to form the quinone, while virH performs the epoxidation. Finally, the two remaining short-chain dehydrogenases, virK and virL, are probably responsible for reducing the ketones to the corresponding alcohols to furnish the epoxycyclohexanol structure in trichoxide. This is Short-chain dehydrogenase virD from Hypocrea virens (strain Gv29-8 / FGSC 10586) (Gliocladium virens).